Consider the following 240-residue polypeptide: 7-cyano-7-deazaguanine synthase (240 aa).

Position 9-19 (9-19) interacts with ATP; sequence FSGGLDSTACL. The Zn(2+) site is built by Cys195, Cys210, Cys213, and Cys216.

It belongs to the QueC family. The cofactor is Zn(2+).

It catalyses the reaction 7-carboxy-7-deazaguanine + NH4(+) + ATP = 7-cyano-7-deazaguanine + ADP + phosphate + H2O + H(+). Its pathway is purine metabolism; 7-cyano-7-deazaguanine biosynthesis. Its function is as follows. Catalyzes the ATP-dependent conversion of 7-carboxy-7-deazaguanine (CDG) to 7-cyano-7-deazaguanine (preQ(0)). The chain is 7-cyano-7-deazaguanine synthase from Pyrococcus furiosus (strain ATCC 43587 / DSM 3638 / JCM 8422 / Vc1).